Reading from the N-terminus, the 344-residue chain is Arginine N-succinyltransferase (344 aa).

Leucine 125 is a succinyl-CoA binding site. Catalysis depends on histidine 229, which acts as the Proton donor.

This sequence belongs to the arginine N-succinyltransferase family.

The enzyme catalyses succinyl-CoA + L-arginine = N(2)-succinyl-L-arginine + CoA + H(+). It participates in amino-acid degradation; L-arginine degradation via AST pathway; L-glutamate and succinate from L-arginine: step 1/5. Functionally, catalyzes the transfer of succinyl-CoA to arginine to produce N(2)-succinylarginine. This chain is Arginine N-succinyltransferase, found in Salmonella agona (strain SL483).